The sequence spans 355 residues: cAMP-dependent protein kinase catalytic subunit PRKX (355 aa).

An N-acetylmethionine modification is found at Met1. The interval Met1–Ser42 is disordered. The 255-residue stretch at Trp46–Phe300 folds into the Protein kinase domain. Residues Val52–Val60 and Lys75 contribute to the ATP site. Asp169 functions as the Proton acceptor in the catalytic mechanism. At Thr200 the chain carries Phosphothreonine. In terms of domain architecture, AGC-kinase C-terminal spans Arg301–Phe355. The disordered stretch occupies residues Pro316–Phe355. Over residues Glu337–Phe355 the composition is skewed to basic and acidic residues.

It belongs to the protein kinase superfamily. AGC Ser/Thr protein kinase family. cAMP subfamily. As to quaternary structure, like other cAMP-dependent protein kinases, the inactive holoenzyme is probably composed of 2 PRKX catalytic subunits and a dimer of regulatory subunits. Interacts (cAMP-dependent) specifically with the regulatory subunits PRKAR1A and PRKAR1B. Compared to other cAMP-dependent serine/threonine protein kinases, does not interact with the 2 other PKA regulatory subunits PRKAR2A and PRKAR2B. Interacts with PIN1 (via WW domain). Interacts with cAMP-dependent protein kinase inhibitor/PKI proteins; inhibits PRKX. Interacts with GPKOW. Interacts with SMAD6. Interacts with PKD1; involved in differentiation and controlled morphogenesis of the kidney. Post-translationally, phosphorylated; autophosphorylates in vitro. In terms of tissue distribution, widely expressed.

The protein localises to the cytoplasm. It localises to the nucleus. The catalysed reaction is L-seryl-[protein] + ATP = O-phospho-L-seryl-[protein] + ADP + H(+). It carries out the reaction L-threonyl-[protein] + ATP = O-phospho-L-threonyl-[protein] + ADP + H(+). Its activity is regulated as follows. Binding of cAMP to the PRKAR1A or PRKAR1B regulatory subunits induces dissociation of the holoenzyme heterotetramer. The released monomeric PRKX is then active and able to phosphorylate its substrates. In terms of biological role, serine/threonine protein kinase regulated by and mediating cAMP signaling in cells. Acts through phosphorylation of downstream targets that may include CREB, SMAD6 and PKD1 and has multiple functions in cellular differentiation and epithelial morphogenesis. Regulates myeloid cell differentiation through SMAD6 phosphorylation. Involved in nephrogenesis by stimulating renal epithelial cell migration and tubulogenesis. Also involved in angiogenesis through stimulation of endothelial cell proliferation, migration and vascular-like structure formation. This chain is cAMP-dependent protein kinase catalytic subunit PRKX (Prkx), found in Mus musculus (Mouse).